Here is a 124-residue protein sequence, read N- to C-terminus: Cytochrome c2 (124 aa).

The residue at position 1 (Gln1) is a Pyrrolidone carboxylic acid. Residues Cys15, Cys18, His19, and Met100 each contribute to the heme c site.

Post-translationally, binds 1 heme c group covalently per subunit.

Its subcellular location is the periplasm. Cytochrome c2 is found mainly in purple, non-sulfur, photosynthetic bacteria where it functions as the electron donor to the oxidized bacteriochlorophyll in the photophosphorylation pathway. However, it may also have a role in the respiratory chain and is found in some non-photosynthetic bacteria. The chain is Cytochrome c2 (cycA) from Cereibacter sphaeroides (Rhodobacter sphaeroides).